Reading from the N-terminus, the 122-residue chain is Large ribosomal subunit protein uL18 (122 aa).

A disordered region spans residues 1 to 25; the sequence is MSQISRKQQTQKRHRRLRRHITGTS. Over residues 9–21 the composition is skewed to basic residues; it reads QTQKRHRRLRRHI.

It belongs to the universal ribosomal protein uL18 family. In terms of assembly, part of the 50S ribosomal subunit; part of the 5S rRNA/L5/L18/L25 subcomplex. Contacts the 5S and 23S rRNAs.

Functionally, this is one of the proteins that bind and probably mediate the attachment of the 5S RNA into the large ribosomal subunit, where it forms part of the central protuberance. This Synechococcus sp. (strain CC9605) protein is Large ribosomal subunit protein uL18.